Here is a 257-residue protein sequence, read N- to C-terminus: ATP synthase subunit a (257 aa).

Positions 1-8 are cleaved as a propeptide — removed in mature form; sequence MRHLDFVL. The next 7 helical transmembrane spans lie at 34–54, 93–113, 122–142, 149–169, 187–207, 210–230, and 231–251; these read LTNI…YSLL, FFPL…IGLV, HFIL…ILGF, FFSL…LVLI, ANIL…YNIM, GIIF…FSGL, and ELAI…SYIK.

This sequence belongs to the ATPase A chain family. F-type ATPases have 2 components, CF(1) - the catalytic core - and CF(0) - the membrane proton channel. CF(1) has five subunits: alpha(3), beta(3), gamma(1), delta(1), epsilon(1). CF(0) has three main subunits: a, b and c.

Its subcellular location is the mitochondrion inner membrane. Functionally, mitochondrial membrane ATP synthase (F(1)F(0) ATP synthase or Complex V) produces ATP from ADP in the presence of a proton gradient across the membrane which is generated by electron transport complexes of the respiratory chain. F-type ATPases consist of two structural domains, F(1) - containing the extramembraneous catalytic core and F(0) - containing the membrane proton channel, linked together by a central stalk and a peripheral stalk. During catalysis, ATP synthesis in the catalytic domain of F(1) is coupled via a rotary mechanism of the central stalk subunits to proton translocation. Key component of the proton channel; it may play a direct role in the translocation of protons across the membrane. This chain is ATP synthase subunit a (atp6), found in Penicillium chrysogenum (Penicillium notatum).